The following is a 288-amino-acid chain: uncharacterized protein (288 aa).

Residues Met1–Thr59 enclose the HTH lysR-type domain. The H-T-H motif DNA-binding region spans Phe19–Ser38.

The protein belongs to the LysR transcriptional regulatory family.

This is an uncharacterized protein from Haemophilus influenzae (strain ATCC 51907 / DSM 11121 / KW20 / Rd).